A 639-amino-acid chain; its full sequence is Serine/threonine-protein kinase PAK mbt (639 aa).

A CRIB domain is found at I11–G24. The linker stretch occupies residues F25–N367. Disordered stretches follow at residues H79–Y195 and R222–R345. Composition is skewed to low complexity over residues N91–G129, V138–P159, P227–P241, and Q274–H295. Residues P296 to L308 show a composition bias toward basic residues. Over residues A309–G331 the composition is skewed to low complexity. Positions L368 to L619 constitute a Protein kinase domain. ATP contacts are provided by residues I374–V382 and K397. The Proton acceptor role is filled by D487. S521 bears the Phosphoserine mark. T525 is subject to Phosphothreonine.

The protein belongs to the protein kinase superfamily. STE Ser/Thr protein kinase family. STE20 subfamily. Interacts tightly with GTP-bound but not GDP-bound Cdc42 and weakly with Rac1. It depends on Mg(2+) as a cofactor. Post-translationally, autophosphorylated when activated by Cdc42. As to expression, expressed in adult brain and eye. High levels detected in developing photoreceptor cells and future bristle cells, and lower levels in cone and pigment cells, as detected in third instar eye imaginal disks (at protein level).

Its subcellular location is the cell junction. The protein localises to the adherens junction. The protein resides in the cell membrane. The catalysed reaction is L-seryl-[protein] + ATP = O-phospho-L-seryl-[protein] + ADP + H(+). It catalyses the reaction L-threonyl-[protein] + ATP = O-phospho-L-threonyl-[protein] + ADP + H(+). Its function is as follows. Involved in neurogenesis of the adult central nervous system, and together with Cdc42, regulates photoreceptor cell morphogenesis. Phosphorylates exogenous substrates when activated by Cdc42. The chain is Serine/threonine-protein kinase PAK mbt from Drosophila melanogaster (Fruit fly).